Consider the following 22-residue polypeptide: NDMA-dependent alcohol dehydrogenase (22 aa).

Belongs to the zinc-containing alcohol dehydrogenase family. In terms of assembly, homotetramer. Requires NADH as cofactor.

The protein resides in the cytoplasm. The enzyme catalyses N,N-dimethyl-4-nitrosoaniline + a primary alcohol = 4-(hydroxylamino)-N,N-dimethylaniline + an aldehyde. It carries out the reaction ethanol + A = acetaldehyde + AH2. Functionally, this is a novel enzyme, catalytically different from common alcohol dehydrogenases. It is effective in oxidizing ethanol, other primary alcohols and benzylalcohol only in the presence of p-nitroso-N,N-dimethylaniline (NDMA) as an electron acceptor. NADH acts as a cofactor here instead of as a coenzyme. In Rhodococcus erythropolis (Arthrobacter picolinophilus), this protein is NDMA-dependent alcohol dehydrogenase.